The primary structure comprises 190 residues: Putative CRISPR system CMR subunit Cmr7 2 (190 aa).

Belongs to the CRISPR system Cmr7 family. As to quaternary structure, homodimer.

In terms of biological role, CRISPR (clustered regularly interspaced short palindromic repeat) is an adaptive immune system that provides protection against mobile genetic elements (viruses, transposable elements and conjugative plasmids). CRISPR clusters contain spacers, sequences complementary to antecedent mobile elements, and target invading nucleic acids. CRISPR clusters are transcribed and processed into CRISPR RNA (crRNA). The protein is Putative CRISPR system CMR subunit Cmr7 2 (cmr7b) of Saccharolobus solfataricus (strain ATCC 35092 / DSM 1617 / JCM 11322 / P2) (Sulfolobus solfataricus).